Consider the following 585-residue polypeptide: Polyadenylate-binding protein, cytoplasmic and nuclear (585 aa).

Residues 14–37 (QLKIEEQTAPTTTESETPKVETSG) are disordered. RRM domains follow at residues 38 to 116 (ASLY…WSQR), 126 to 203 (GNIY…LHVS), 219 to 296 (TNVY…RAQK), and 322 to 399 (VNLF…IAQR). The PABC domain occupies 488–567 (GQFPRNGQQQ…AHAAYQKFKE (80 aa)).

It belongs to the polyadenylate-binding protein type-1 family.

Its subcellular location is the cytoplasm. It localises to the nucleus. Binds the poly(A) tail of mRNA. Appears to be an important mediator of the multiple roles of the poly(A) tail in mRNA biogenesis, stability and translation. In the nucleus, involved in both mRNA cleavage and polyadenylation. Is also required for efficient mRNA export to the cytoplasm. Acts in concert with a poly(A)-specific nuclease (PAN) to affect poly(A) tail shortening, which may occur concomitantly with either nucleocytoplasmic mRNA transport or translational initiation. In the cytoplasm, stimulates translation initiation and regulates mRNA decay through translation termination-coupled poly(A) shortening, probably mediated by PAN. This Eremothecium gossypii (strain ATCC 10895 / CBS 109.51 / FGSC 9923 / NRRL Y-1056) (Yeast) protein is Polyadenylate-binding protein, cytoplasmic and nuclear (PAB1).